We begin with the raw amino-acid sequence, 538 residues long: MSLRPSTRAELRKKIYKTGVDADEARRRREDNLVEIRKNKREDSLLKKRREGMMLQQQLPLGAGLDGPQTAAAVEKRLEGIPMMVQGVYSDDPQAQLEATTQFRKLLSIERSPPIDEVIKAGVIPRFVEFLGRHDHPQLQFEAAWALTNVASGTSDHTRVVIEQGAVPIFVKLLTSASDDVREQAVWALGNVAGDSPNCRNLVLNYGALEPLLAQLNENSKLSMLRNATWTLSNFCRGKPPTPFEQVKPALPILRQLIYLNDEEVLTDACWALSYLSDGPNDKIQAVIEAGVCPRLVELLGHQSPTVLIPALRTVGNIVTGDDSQTQFIIESGVLPHLYNLLTQNHKKSIKKEACWTISNITAGNKLQIEAVVGAGIILPLVHLLQNAEFDIKKEAAWAISNATSGGSHEQIQYLVTQGCIKPLCDLLICPDPRIVTVCLEGLENILKVGEADKEMGLNSGVNLYAQIIEESDGLDKVENLQSHDNNEIYEKAVKILERYWAEEEEEQILQDGGNDNSQQAFNFGNNPAAPVGGFKFA.

Residues 1–58 (MSLRPSTRAELRKKIYKTGVDADEARRRREDNLVEIRKNKREDSLLKKRREGMMLQQQ) form the IBB domain. ARM repeat units lie at residues 112 to 152 (SPPI…NVAS), 155 to 194 (SDHT…NVAG), 197 to 237 (PNCR…NFCR), 239 to 278 (KPPT…YLSD), 281 to 320 (NDKI…NIVT), 323 to 363 (DSQT…NITA), 366 to 405 (KLQI…NATS), and 409 to 448 (HEQI…NILK).

Belongs to the importin alpha family. As to quaternary structure, forms a complex with importin subunit beta-1. Interacts with A.tumefaciens VirD2 and VirE2.

The protein resides in the nucleus envelope. Binds to conventional NLS motifs and mediates nuclear protein import across the nuclear envelope. Acts as a cellular receptor for the nuclear import of the virD2 protein of Agrobacterium and is essential for Agrobacterium-mediated root transformation. This chain is Importin subunit alpha-4, found in Arabidopsis thaliana (Mouse-ear cress).